A 337-amino-acid chain; its full sequence is Receptor like protein kinase S.3 (337 aa).

The region spanning 50 to 316 is the Protein kinase domain; it reads FKESELFGTE…VNYLEGNDVL (267 aa). ATP contacts are provided by residues 56–64 and Lys78; that span reads FGTEANGTV. A Phosphotyrosine modification is found at Tyr123. Asp171 functions as the Proton acceptor in the catalytic mechanism.

It belongs to the protein kinase superfamily. Ser/Thr protein kinase family.

It carries out the reaction L-seryl-[protein] + ATP = O-phospho-L-seryl-[protein] + ADP + H(+). It catalyses the reaction L-threonyl-[protein] + ATP = O-phospho-L-threonyl-[protein] + ADP + H(+). The sequence is that of Receptor like protein kinase S.3 (LECRKS3) from Arabidopsis thaliana (Mouse-ear cress).